Consider the following 753-residue polypeptide: Metal regulatory transcription factor 1 (753 aa).

G2 carries the N-acetylglycine modification. S5 carries the phosphoserine modification. Residues 133-138 (KRKEVK) carry the Nuclear localization signal motif. 6 consecutive C2H2-type zinc fingers follow at residues 140 to 164 (YQCT…QKTH), 170 to 194 (FVCN…VRVH), 200 to 224 (FECD…QRLH), 229 to 253 (FNCE…IRTH), 259 to 283 (FRCD…VRTH), and 289 to 313 (FFCP…MKGH). S305 is modified (phosphoserine). Disordered regions lie at residues 308–328 (SHMK…QHNG), 395–466 (ESFN…ALLQ), and 648–715 (SRRK…LSAM). Polar residues predominate over residues 408-417 (PPSTGNSASL). Residues 655-666 (SPPPPEPSPQAP) are compositionally biased toward pro residues. The segment covering 679–698 (SSAPVPGSSSSTLPSSCEQS) has biased composition (low complexity). Residues 700-712 (QAETPSDPQTETL) show a composition bias toward polar residues.

The protein resides in the nucleus. Its subcellular location is the cytoplasm. Zinc-dependent transcriptional regulator of cellular adaption to conditions of exposure to heavy metals. Binds to metal responsive elements (MRE) in promoters and activates the transcription of metallothionein genes like metallothionein-2/MT2A. Also regulates the expression of metalloproteases in response to intracellular zinc and functions as a catabolic regulator of cartilages. The sequence is that of Metal regulatory transcription factor 1 (MTF1) from Homo sapiens (Human).